A 338-amino-acid polypeptide reads, in one-letter code: Ferrochelatase (338 aa).

Fe cation contacts are provided by H189 and E294.

This sequence belongs to the ferrochelatase family.

Its subcellular location is the cytoplasm. It catalyses the reaction heme b + 2 H(+) = protoporphyrin IX + Fe(2+). It functions in the pathway porphyrin-containing compound metabolism; protoheme biosynthesis; protoheme from protoporphyrin-IX: step 1/1. Functionally, catalyzes the ferrous insertion into protoporphyrin IX. This chain is Ferrochelatase, found in Pseudomonas putida (strain ATCC 700007 / DSM 6899 / JCM 31910 / BCRC 17059 / LMG 24140 / F1).